The chain runs to 159 residues: Nucleotide-binding protein PSPA7_4966 (159 aa).

It belongs to the YajQ family.

In terms of biological role, nucleotide-binding protein. The protein is Nucleotide-binding protein PSPA7_4966 of Pseudomonas paraeruginosa (strain DSM 24068 / PA7) (Pseudomonas aeruginosa (strain PA7)).